The chain runs to 518 residues: Glutamate--cysteine ligase (518 aa).

This sequence belongs to the glutamate--cysteine ligase type 1 family. Type 1 subfamily.

It carries out the reaction L-cysteine + L-glutamate + ATP = gamma-L-glutamyl-L-cysteine + ADP + phosphate + H(+). It functions in the pathway sulfur metabolism; glutathione biosynthesis; glutathione from L-cysteine and L-glutamate: step 1/2. This Salmonella arizonae (strain ATCC BAA-731 / CDC346-86 / RSK2980) protein is Glutamate--cysteine ligase.